A 241-amino-acid polypeptide reads, in one-letter code: Protein TraL (241 aa).

This sequence to plasmid R751 TraL.

In Escherichia coli, this protein is Protein TraL (traL).